The primary structure comprises 260 residues: Transmembrane protein 106C (260 aa).

The N-myristoyl glycine moiety is linked to residue G2. The helical transmembrane segment at 85–105 (YVLLSVLLCLLASGLVFFFLF) threads the bilayer. N-linked (GlcNAc...) asparagine glycosylation occurs at N171. The chain crosses the membrane as a helical span at residues 196-216 (SYVYFYCTLPAILVHNIVIFM).

It belongs to the TMEM106 family. In terms of assembly, interacts with TMEM106B.

The protein localises to the endoplasmic reticulum membrane. The protein resides in the membrane. This chain is Transmembrane protein 106C (Tmem106c), found in Rattus norvegicus (Rat).